A 263-amino-acid polypeptide reads, in one-letter code: 2-dehydro-3-deoxyphosphooctonate aldolase (263 aa).

Belongs to the KdsA family.

It is found in the cytoplasm. It carries out the reaction D-arabinose 5-phosphate + phosphoenolpyruvate + H2O = 3-deoxy-alpha-D-manno-2-octulosonate-8-phosphate + phosphate. It functions in the pathway carbohydrate biosynthesis; 3-deoxy-D-manno-octulosonate biosynthesis; 3-deoxy-D-manno-octulosonate from D-ribulose 5-phosphate: step 2/3. Its pathway is bacterial outer membrane biogenesis; lipopolysaccharide biosynthesis. The sequence is that of 2-dehydro-3-deoxyphosphooctonate aldolase from Wolinella succinogenes (strain ATCC 29543 / DSM 1740 / CCUG 13145 / JCM 31913 / LMG 7466 / NCTC 11488 / FDC 602W) (Vibrio succinogenes).